A 397-amino-acid polypeptide reads, in one-letter code: Pectate lyase 2 (397 aa).

The signal sequence occupies residues 1–25 (MGIKQCCYILYFTLALVALLQPVRS). Residue Asn37 is glycosylated (N-linked (GlcNAc...) asparagine). The cysteines at positions 54 and 71 are disulfide-linked. Ca(2+) contacts are provided by Asp194, Asp218, and Asp222. Arg274 is a catalytic residue.

It belongs to the polysaccharide lyase 1 family. Amb a subfamily. Monomer. Requires Ca(2+) as cofactor. In terms of processing, the N-terminus is blocked. As to expression, pollen and flowers.

It carries out the reaction Eliminative cleavage of (1-&gt;4)-alpha-D-galacturonan to give oligosaccharides with 4-deoxy-alpha-D-galact-4-enuronosyl groups at their non-reducing ends.. It functions in the pathway glycan metabolism; pectin degradation; 2-dehydro-3-deoxy-D-gluconate from pectin: step 2/5. Has pectate lyase activity. The chain is Pectate lyase 2 from Ambrosia artemisiifolia (Common ragweed).